The following is a 524-amino-acid chain: Ribosomal protein uS12 methylthiotransferase RimO (524 aa).

The segment covering 20-31 (NSQTASDSTQPA) has biased composition (polar residues). The tract at residues 20–59 (NSQTASDSTQPAASAYHHKANHNQNRSIEQSAQQAAEQSL) is disordered. Residues 48 to 58 (EQSAQQAAEQS) show a composition bias toward low complexity. Residues 67–177 (PKVGFVSLGC…VITAVSTHAP (111 aa)) enclose the MTTase N-terminal domain. The [4Fe-4S] cluster site is built by C76, C112, C141, C216, C220, and C223. The Radical SAM core domain maps to 202-443 (LTPSHYAYLK…MAVQQQISEQ (242 aa)). Positions 446-519 (QEKVGKTMTV…EYDLFASYDA (74 aa)) constitute a TRAM domain.

The protein belongs to the methylthiotransferase family. RimO subfamily. [4Fe-4S] cluster is required as a cofactor.

Its subcellular location is the cytoplasm. It catalyses the reaction L-aspartate(89)-[ribosomal protein uS12]-hydrogen + (sulfur carrier)-SH + AH2 + 2 S-adenosyl-L-methionine = 3-methylsulfanyl-L-aspartate(89)-[ribosomal protein uS12]-hydrogen + (sulfur carrier)-H + 5'-deoxyadenosine + L-methionine + A + S-adenosyl-L-homocysteine + 2 H(+). In terms of biological role, catalyzes the methylthiolation of an aspartic acid residue of ribosomal protein uS12. This chain is Ribosomal protein uS12 methylthiotransferase RimO, found in Psychrobacter sp. (strain PRwf-1).